The chain runs to 31 residues: Photosystem II reaction center protein T (31 aa).

The chain crosses the membrane as a helical span at residues 3-23; the sequence is SVAYILILTMALAVLFFAIAF.

This sequence belongs to the PsbT family. In terms of assembly, PSII is composed of 1 copy each of membrane proteins PsbA, PsbB, PsbC, PsbD, PsbE, PsbF, PsbH, PsbI, PsbJ, PsbK, PsbL, PsbM, PsbT, PsbX, PsbY, PsbZ, Psb30/Ycf12, peripheral proteins PsbO, CyanoQ (PsbQ), PsbU, PsbV and a large number of cofactors. It forms dimeric complexes.

The protein localises to the cellular thylakoid membrane. Found at the monomer-monomer interface of the photosystem II (PS II) dimer, plays a role in assembly and dimerization of PSII. PSII is a light-driven water plastoquinone oxidoreductase, using light energy to abstract electrons from H(2)O, generating a proton gradient subsequently used for ATP formation. In Gloeothece citriformis (strain PCC 7424) (Cyanothece sp. (strain PCC 7424)), this protein is Photosystem II reaction center protein T.